We begin with the raw amino-acid sequence, 283 residues long: Nucleoid occlusion protein (283 aa).

The tract at residues 1–26 (MKQPFSRLFGFGDKQDQEMETGKQEE) is disordered. A compositionally biased stretch (basic and acidic residues) spans 13 to 26 (DKQDQEMETGKQEE). A DNA-binding region (H-T-H motif) is located at residues 143-162 (ESLAQRLGKGQSTIANKLRL).

This sequence belongs to the ParB family.

Its subcellular location is the cytoplasm. It localises to the nucleoid. Effects nucleoid occlusion by binding relatively nonspecifically to DNA and preventing the assembly of the division machinery in the vicinity of the nucleoid, especially under conditions that disturb the cell cycle. It helps to coordinate cell division and chromosome segregation by preventing the formation of the Z ring through the nucleoid, which would cause chromosome breakage. This is Nucleoid occlusion protein from Halalkalibacterium halodurans (strain ATCC BAA-125 / DSM 18197 / FERM 7344 / JCM 9153 / C-125) (Bacillus halodurans).